The sequence spans 251 residues: MILKKISILSDNYVWVLLNTSGSCIIIDPGLSEPIIQEIERKKWRLRAILLTHNHIDHTGGTRKIIEYFPKISVFGPKETRQHGVNKIVSHGDRIILLDKIFYVFFTPGHTSGHVSYYSQPYIFCGDTLFSAGCGRVFKNKHLEMYRSIKIISSLPDSTLLCCSHEYTLSNLQFSMFILPNDNFIKLYLKKIEIKLKLGQSSLPSYIFFEKKINLFLRTNDNYVKKSIGLKSTCTDFEVFKRLRLKKDFWS.

His-53, His-55, Asp-57, His-58, His-110, Asp-127, and His-165 together coordinate Zn(2+).

Belongs to the metallo-beta-lactamase superfamily. Glyoxalase II family. In terms of assembly, monomer. The cofactor is Zn(2+).

It catalyses the reaction an S-(2-hydroxyacyl)glutathione + H2O = a 2-hydroxy carboxylate + glutathione + H(+). Its pathway is secondary metabolite metabolism; methylglyoxal degradation; (R)-lactate from methylglyoxal: step 2/2. Its function is as follows. Thiolesterase that catalyzes the hydrolysis of S-D-lactoyl-glutathione to form glutathione and D-lactic acid. The polypeptide is Hydroxyacylglutathione hydrolase (Buchnera aphidicola subsp. Acyrthosiphon pisum (strain APS) (Acyrthosiphon pisum symbiotic bacterium)).